A 418-amino-acid chain; its full sequence is MTLLALGINHKTAPVSLRERVSFSPDKLDQALDSLLAQPMVQGGVVLSTCNRTELYLSVEEQDNLQEALIRWLCDYHNLNEEDLRKSLYWHQDNDAVSHLMRVASGLDSLVLGEPQILGQVKKAFADSQKGHMKASELERMFQKSFSVAKRVRTETDIGASAVSVAFAACTLARQIFESLSTVTVLLVGAGETIELVARHLREHKVQKMIIANRTRERAQILADEVGAEVIALSDIDERLREADIIISSTASPLPIIGKGMVERALKSRRNQPMLLVDIAVPRDVEPEVGKLANAYLYSVDDLQSIISHNLAQRKAAAVEAETIVAQETSEFMAWLRAQSASETIREYRSQAEQVRDELTAKALAALEQGGDAQAIMQDLAWKLTNRLIHAPTKSLQQAARDGDNERLNILRDSLGLE.

Substrate is bound by residues 49–52 (TCNR), Ser-109, 114–116 (EPQ), and Gln-120. Cys-50 serves as the catalytic Nucleophile. 189–194 (GAGETI) is an NADP(+) binding site.

It belongs to the glutamyl-tRNA reductase family. In terms of assembly, homodimer.

The catalysed reaction is (S)-4-amino-5-oxopentanoate + tRNA(Glu) + NADP(+) = L-glutamyl-tRNA(Glu) + NADPH + H(+). It functions in the pathway porphyrin-containing compound metabolism; protoporphyrin-IX biosynthesis; 5-aminolevulinate from L-glutamyl-tRNA(Glu): step 1/2. Its function is as follows. Catalyzes the NADPH-dependent reduction of glutamyl-tRNA(Glu) to glutamate 1-semialdehyde (GSA). The polypeptide is Glutamyl-tRNA reductase (Escherichia coli O157:H7).